The sequence spans 377 residues: MNRSDTLDLSLNLMRRPSVTPEDHDCQAVMAERLAKAGFQIENMRFDDVDNLWARRGTQQPVFCFAGHTDVVPTGNLDNWNSDPFAPEVRDGILYGRGAADMKTALAAMVVASERFVEKHPNHKGSIAFLITSDEEGPSINGTVKVIETLEARHEKMTWCLVGEPSSTHQLGDIIKNGRRGSLNAVLTIKGKQGHVAYPHLARNPIHLASAAIHELCETVWDQGNEYFPATSFQISNIHAGTGATNVVPGTMAVTFNFRYSTEVTAEQLKERVVEVLQRHGLDYDIVWTHSGLPFLTPVGELVNAATHAIKTVTGVDTQLSTSGGTSDGRFIAPTGAQVLELGVLNASIHQINEHVNVADLEPLAEIYEKILEQLLA.

Histidine 68 is a Zn(2+) binding site. The active site involves aspartate 70. Residue aspartate 101 coordinates Zn(2+). Glutamate 135 functions as the Proton acceptor in the catalytic mechanism. Zn(2+)-binding residues include glutamate 136, glutamate 164, and histidine 350.

The protein belongs to the peptidase M20A family. DapE subfamily. In terms of assembly, homodimer. Zn(2+) serves as cofactor. Requires Co(2+) as cofactor.

The enzyme catalyses N-succinyl-(2S,6S)-2,6-diaminopimelate + H2O = (2S,6S)-2,6-diaminopimelate + succinate. It participates in amino-acid biosynthesis; L-lysine biosynthesis via DAP pathway; LL-2,6-diaminopimelate from (S)-tetrahydrodipicolinate (succinylase route): step 3/3. Functionally, catalyzes the hydrolysis of N-succinyl-L,L-diaminopimelic acid (SDAP), forming succinate and LL-2,6-diaminopimelate (DAP), an intermediate involved in the bacterial biosynthesis of lysine and meso-diaminopimelic acid, an essential component of bacterial cell walls. The protein is Succinyl-diaminopimelate desuccinylase of Acinetobacter baylyi (strain ATCC 33305 / BD413 / ADP1).